The sequence spans 308 residues: Elongation factor Ts (308 aa).

Residues 80–83 are involved in Mg(2+) ion dislocation from EF-Tu; that stretch reads TDFV.

Belongs to the EF-Ts family.

It localises to the cytoplasm. Its function is as follows. Associates with the EF-Tu.GDP complex and induces the exchange of GDP to GTP. It remains bound to the aminoacyl-tRNA.EF-Tu.GTP complex up to the GTP hydrolysis stage on the ribosome. The sequence is that of Elongation factor Ts from Rhodopseudomonas palustris (strain BisB5).